An 843-amino-acid polypeptide reads, in one-letter code: Protein P (843 aa).

Residues 1–177 (MPLSYQHFRK…FCGSPYSWEQ (177 aa)) are terminal protein domain (TP). Residues 178–346 (DLQHGRLVFQ…YCLSHIVNLI (169 aa)) form a spacer region. 2 disordered regions span residues 219-249 (RKSR…RIHP) and 290-316 (STSK…RSQS). Polar residues predominate over residues 290-299 (STSKGHSSSG). The tract at residues 347–690 (EDWGPCAEHG…YMTLYPVARQ (344 aa)) is polymerase/reverse transcriptase domain (RT). Residues 357 to 600 (EHRIRTPRTP…YSLNFMGYVI (244 aa)) enclose the Reverse transcriptase domain. 3 residues coordinate Mg(2+): D429, D551, and D552.

It belongs to the hepadnaviridae P protein family.

It carries out the reaction DNA(n) + a 2'-deoxyribonucleoside 5'-triphosphate = DNA(n+1) + diphosphate. It catalyses the reaction Endonucleolytic cleavage to 5'-phosphomonoester.. Its activity is regulated as follows. Activated by host HSP70 and HSP40 in vitro to be able to bind the epsilon loop of the pgRNA. Because deletion of the RNase H region renders the protein partly chaperone-independent, the chaperones may be needed indirectly to relieve occlusion of the RNA-binding site by this domain. Inhibited by several reverse-transcriptase inhibitors: Lamivudine, Adefovir and Entecavir. Multifunctional enzyme that converts the viral RNA genome into dsDNA in viral cytoplasmic capsids. This enzyme displays a DNA polymerase activity that can copy either DNA or RNA templates, and a ribonuclease H (RNase H) activity that cleaves the RNA strand of RNA-DNA heteroduplexes in a partially processive 3'- to 5'-endonucleasic mode. Neo-synthesized pregenomic RNA (pgRNA) are encapsidated together with the P protein, and reverse-transcribed inside the nucleocapsid. Initiation of reverse-transcription occurs first by binding the epsilon loop on the pgRNA genome, and is initiated by protein priming, thereby the 5'-end of (-)DNA is covalently linked to P protein. Partial (+)DNA is synthesized from the (-)DNA template and generates the relaxed circular DNA (RC-DNA) genome. After budding and infection, the RC-DNA migrates in the nucleus, and is converted into a plasmid-like covalently closed circular DNA (cccDNA). The activity of P protein does not seem to be necessary for cccDNA generation, and is presumably released from (+)DNA by host nuclear DNA repair machinery. The chain is Protein P from Homo sapiens (Human).